Here is a 124-residue protein sequence, read N- to C-terminus: Small ribosomal subunit protein uS12 (124 aa).

Residues 1–25 (MATINQLVRKPRQATTYKSASPALD) are disordered. D89 bears the 3-methylthioaspartic acid mark.

The protein belongs to the universal ribosomal protein uS12 family. Part of the 30S ribosomal subunit. Contacts proteins S8 and S17. May interact with IF1 in the 30S initiation complex.

Functionally, with S4 and S5 plays an important role in translational accuracy. In terms of biological role, interacts with and stabilizes bases of the 16S rRNA that are involved in tRNA selection in the A site and with the mRNA backbone. Located at the interface of the 30S and 50S subunits, it traverses the body of the 30S subunit contacting proteins on the other side and probably holding the rRNA structure together. The combined cluster of proteins S8, S12 and S17 appears to hold together the shoulder and platform of the 30S subunit. This chain is Small ribosomal subunit protein uS12, found in Stenotrophomonas maltophilia (strain R551-3).